A 252-amino-acid chain; its full sequence is Ditrans,polycis-undecaprenyl-diphosphate synthase ((2E,6E)-farnesyl-diphosphate specific) (252 aa).

Residue Asp24 is part of the active site. Residue Asp24 coordinates Mg(2+). Residues Gly25–Arg28, Trp29, Arg37, His41, and Ser69–Glu71 each bind substrate. The active-site Proton acceptor is Asn72. Positions 73, 75, and 192 each coordinate substrate. Residue His197 participates in Mg(2+) binding. Arg198–Ser200 is a binding site for substrate. Glu211 serves as a coordination point for Mg(2+).

It belongs to the UPP synthase family. As to quaternary structure, homodimer. Mg(2+) is required as a cofactor.

It carries out the reaction 8 isopentenyl diphosphate + (2E,6E)-farnesyl diphosphate = di-trans,octa-cis-undecaprenyl diphosphate + 8 diphosphate. Catalyzes the sequential condensation of isopentenyl diphosphate (IPP) with (2E,6E)-farnesyl diphosphate (E,E-FPP) to yield (2Z,6Z,10Z,14Z,18Z,22Z,26Z,30Z,34E,38E)-undecaprenyl diphosphate (di-trans,octa-cis-UPP). UPP is the precursor of glycosyl carrier lipid in the biosynthesis of bacterial cell wall polysaccharide components such as peptidoglycan and lipopolysaccharide. The sequence is that of Ditrans,polycis-undecaprenyl-diphosphate synthase ((2E,6E)-farnesyl-diphosphate specific) from Yersinia pestis.